A 372-amino-acid polypeptide reads, in one-letter code: N-methyl-L-tryptophan oxidase (372 aa).

4-34 provides a ligand contact to FAD; sequence DLIIIGSGSVGAAAGYYATRAGLNVLMTDAH. Position 308 is an S-8alpha-FAD cysteine (Cys-308).

It belongs to the MSOX/MTOX family. MTOX subfamily. Monomer. FAD serves as cofactor.

The catalysed reaction is N(alpha)-methyl-L-tryptophan + O2 + H2O = L-tryptophan + formaldehyde + H2O2. In terms of biological role, catalyzes the oxidative demethylation of N-methyl-L-tryptophan. The polypeptide is N-methyl-L-tryptophan oxidase (Escherichia coli (strain SMS-3-5 / SECEC)).